We begin with the raw amino-acid sequence, 203 residues long: Pectinesterase inhibitor 12 (203 aa).

Positions 1–26 (MRMSKALAAVVAISVSLSAAAMGVDA) are cleaved as a signal peptide. 2 cysteine pairs are disulfide-bonded: Cys32-Cys47 and Cys100-Cys140.

It belongs to the PMEI family.

Its subcellular location is the secreted. The protein localises to the extracellular space. The protein resides in the apoplast. Functionally, pectin methylesterase (PME) inhibitor that inhibits PME in vitro. The protein is Pectinesterase inhibitor 12 of Oryza sativa subsp. japonica (Rice).